A 136-amino-acid polypeptide reads, in one-letter code: Large ribosomal subunit protein uL16 (136 aa).

The protein belongs to the universal ribosomal protein uL16 family. Part of the 50S ribosomal subunit.

Functionally, binds 23S rRNA and is also seen to make contacts with the A and possibly P site tRNAs. The chain is Large ribosomal subunit protein uL16 from Histophilus somni (strain 129Pt) (Haemophilus somnus).